Consider the following 62-residue polypeptide: Large ribosomal subunit protein bL33 (62 aa).

It belongs to the bacterial ribosomal protein bL33 family.

In Trichodesmium erythraeum (strain IMS101), this protein is Large ribosomal subunit protein bL33.